Consider the following 216-residue polypeptide: Invasion protein InvF (216 aa).

The region spanning 112-210 (YWLVGYLLAQ…GVSPRKLSNI (99 aa)) is the HTH araC/xylS-type domain. 2 DNA-binding regions (H-T-H motif) span residues 129 to 150 (RMLGEDYGVSYTHFRRLCSRAL) and 177 to 200 (ITQLAVNHGYSSPSHFSSEIKELI).

Transcriptional regulator required for the expression of several genes encoding type III secretion system SPI1 effector proteins. The interaction with SicA is necessary for the activation of sigDE (sopB pipC), sicAsipBCDA, and sopE. The sequence is that of Invasion protein InvF (invF) from Salmonella typhi.